Here is a 937-residue protein sequence, read N- to C-terminus: FNIP repeat-containing protein DDB_G0271996 (937 aa).

Over residues 1–12 (MQQPISIQQPVV) the composition is skewed to polar residues. The disordered stretch occupies residues 1 to 60 (MQQPISIQQPVVNNINNSPNNQANINNNTTNNTNNNNNNNNTTNNIANNNNSNNINNNNE). Low complexity predominate over residues 13–60 (NNINNSPNNQANINNNTTNNTNNNNNNNNTTNNIANNNNSNNINNNNE). FNIP repeat units lie at residues 307-350 (FNQP…LGQR), 354-394 (PIPI…TLDN), 396-439 (FNQP…FHQN), and 598-640 (YNHQ…RVKS). The stretch at 677-769 (VEQQAQYAQQ…EEEDTNNHQH (93 aa)) forms a coiled coil. The segment covering 719-729 (KQQQQQQQDNE) has biased composition (low complexity). 3 disordered regions span residues 719–767 (KQQQ…TNNH), 794–823 (SNNS…EEED), and 910–937 (QNQN…NVKK). Acidic residues predominate over residues 751 to 763 (LEEEQENEEEEED). 2 stretches are compositionally biased toward low complexity: residues 794 to 814 (SNNS…NNNS) and 910 to 929 (QNQN…NNNN). A coiled-coil region spans residues 902-937 (ICNNINQNQNQNNNNYNNNNNNNNNNNNNKKKNVKK).

In Dictyostelium discoideum (Social amoeba), this protein is FNIP repeat-containing protein DDB_G0271996.